A 516-amino-acid chain; its full sequence is Lipid II flippase MurJ (516 aa).

The next 11 membrane-spanning stretches (helical) occupy residues 93–113 (WALAVLSVVGIAGASWVVFAV), 133–153 (IMFPYIVFISLTTLASGVLNT), 159–179 (LPAFAPVLLNVAFIAAAVFVA), 188–208 (ALAWAVIVGGVLQFLVQLPGL), 233–253 (VLAKMVPATFAVSVAQLSLII), 275–295 (LMEFPTALLGVALGTILLPSL), 317–337 (VTFLLAAPSALALFFFATPLT), 358–378 (LATYGIGLVGIILIKILAPGF), 390–409 (IAIGVLIVTQLSNYVFVPLI), 448–468 (FFVQLVGAALVLAGLMHWCAI), and 483–503 (IALMAACLVLFAALYFGMLWV).

It belongs to the MurJ/MviN family.

It localises to the cell inner membrane. Its pathway is cell wall biogenesis; peptidoglycan biosynthesis. Its function is as follows. Involved in peptidoglycan biosynthesis. Transports lipid-linked peptidoglycan precursors from the inner to the outer leaflet of the cytoplasmic membrane. This Burkholderia cenocepacia (strain ATCC BAA-245 / DSM 16553 / LMG 16656 / NCTC 13227 / J2315 / CF5610) (Burkholderia cepacia (strain J2315)) protein is Lipid II flippase MurJ.